The primary structure comprises 97 residues: Mitochondrial import inner membrane translocase subunit Tim8 A (97 aa).

The Twin CX3C motif signature appears at 43–66 (CWEKCMDKPGPKLDSRAEACFVNC). Cystine bridges form between Cys-43–Cys-66 and Cys-47–Cys-62. 4 positions are modified to phosphoserine: Ser-57, Ser-87, Ser-94, and Ser-96.

Belongs to the small Tim family. Heterohexamer; composed of 3 copies of TIMM8A and 3 copies of TIMM13, named soluble 70 kDa complex. Associates with the TIM22 complex, whose core is composed of TIMM22.

It is found in the mitochondrion inner membrane. In terms of biological role, mitochondrial intermembrane chaperone that participates in the import and insertion of some multi-pass transmembrane proteins into the mitochondrial inner membrane. Also required for the transfer of beta-barrel precursors from the TOM complex to the sorting and assembly machinery (SAM complex) of the outer membrane. Acts as a chaperone-like protein that protects the hydrophobic precursors from aggregation and guide them through the mitochondrial intermembrane space. The TIMM8-TIMM13 complex mediates the import of proteins such as TIMM23, SLC25A12/ARALAR1 and SLC25A13/ARALAR2, while the predominant TIMM9-TIMM10 70 kDa complex mediates the import of much more proteins. The chain is Mitochondrial import inner membrane translocase subunit Tim8 A (Timm8a) from Rattus norvegicus (Rat).